Reading from the N-terminus, the 180-residue chain is Ribulose bisphosphate carboxylase small subunit, chloroplastic 2 (180 aa).

The transit peptide at 1 to 56 directs the protein to the chloroplast; it reads MASSVLSSAAVATVSRTPAQASMVAPFTGLKSTVGFPATKKNDDITSLASNGGRVQ.

Belongs to the RuBisCO small chain family. Heterohexadecamer of 8 large and 8 small subunits.

The protein resides in the plastid. Its subcellular location is the chloroplast. In terms of biological role, ruBisCO catalyzes two reactions: the carboxylation of D-ribulose 1,5-bisphosphate, the primary event in carbon dioxide fixation, as well as the oxidative fragmentation of the pentose substrate. Both reactions occur simultaneously and in competition at the same active site. Although the small subunit is not catalytic it is essential for maximal activity. This chain is Ribulose bisphosphate carboxylase small subunit, chloroplastic 2, found in Spinacia oleracea (Spinach).